The primary structure comprises 180 residues: Large ribosomal subunit protein uL5 (180 aa).

This sequence belongs to the universal ribosomal protein uL5 family. As to quaternary structure, part of the 50S ribosomal subunit; part of the 5S rRNA/L5/L18/L25 subcomplex. Contacts the 5S rRNA and the P site tRNA. Forms a bridge to the 30S subunit in the 70S ribosome.

Functionally, this is one of the proteins that bind and probably mediate the attachment of the 5S RNA into the large ribosomal subunit, where it forms part of the central protuberance. In the 70S ribosome it contacts protein S13 of the 30S subunit (bridge B1b), connecting the 2 subunits; this bridge is implicated in subunit movement. Contacts the P site tRNA; the 5S rRNA and some of its associated proteins might help stabilize positioning of ribosome-bound tRNAs. The sequence is that of Large ribosomal subunit protein uL5 from Chlamydia felis (strain Fe/C-56) (Chlamydophila felis).